The sequence spans 473 residues: C3a anaphylatoxin chemotactic receptor (473 aa).

Topologically, residues 1–23 are extracellular; the sequence is MESFTADTNSTDLHSRPLFKPQD. Asn9 carries an N-linked (GlcNAc...) asparagine glycan. The chain crosses the membrane as a helical span at residues 24–46; the sequence is IASMVILSLTCLLGLPGNGLVLW. The Cytoplasmic segment spans residues 47-57; sequence VAGVKMKRTVN. Residues 58–80 form a helical membrane-spanning segment; sequence TVWFLHLTLADFLCCLSLPFSVA. The Extracellular portion of the chain corresponds to 81–96; sequence HLILRGHWPYGLFLCK. Residues Cys95 and Cys172 are joined by a disulfide bond. The helical transmembrane segment at 97-118 threads the bilayer; the sequence is LIPSVIILNMFASVFLLTAISL. Over 119 to 139 the chain is Cytoplasmic; the sequence is DRCLMVHKPIWCQNHRSVRTA. A helical transmembrane segment spans residues 140–160; it reads FAVCGCVWVVTFVMCIPVFVY. The Extracellular portion of the chain corresponds to 161–329; that stretch reads RDLLVVDDYS…TPQVAITISR (169 aa). A sulfotyrosine mark is found at Tyr174 and Tyr184. The N-linked (GlcNAc...) asparagine glycan is linked to Asn201. The segment at 233–252 is disordered; the sequence is FHTSPEDPFSQDSASQQPHY. Residue Tyr308 is modified to Sulfotyrosine. Residues 330–349 traverse the membrane as a helical segment; the sequence is LVVGFLVPFFIMITCYSLIV. Residues 350–366 are Cytoplasmic-facing; sequence FRMRKTNLTKSRNKTLR. A helical membrane pass occupies residues 367–389; that stretch reads VAVAVVTVFFVCWIPYHIVGILL. Residues 390 to 406 lie on the Extracellular side of the membrane; it reads VITDQESALREVVLPWD. A helical transmembrane segment spans residues 407 to 427; the sequence is HMSIALASANSCFNPFLYALL. At 428–473 the chain is on the cytoplasmic side; the sequence is GKDFRKKARQSVKGILEAAFSEELTHSTSCTQDKAPSKRNHMSTDV. Ser448 carries the phosphoserine modification. Thr452 is subject to Phosphothreonine.

Belongs to the G-protein coupled receptor 1 family. As to quaternary structure, interacts with VGF-derived peptide TLQP-21.

The protein resides in the cell membrane. In terms of biological role, receptor for the chemotactic and inflammatory peptide anaphylatoxin C3a. This receptor stimulates chemotaxis, granule enzyme release and superoxide anion production. The sequence is that of C3a anaphylatoxin chemotactic receptor (C3ar1) from Rattus norvegicus (Rat).